Here is a 98-residue protein sequence, read N- to C-terminus: Large ribosomal subunit protein uL23 (98 aa).

This sequence belongs to the universal ribosomal protein uL23 family. In terms of assembly, part of the 50S ribosomal subunit. Contacts protein L29, and trigger factor when it is bound to the ribosome.

In terms of biological role, one of the early assembly proteins it binds 23S rRNA. One of the proteins that surrounds the polypeptide exit tunnel on the outside of the ribosome. Forms the main docking site for trigger factor binding to the ribosome. The polypeptide is Large ribosomal subunit protein uL23 (Rickettsia bellii (strain OSU 85-389)).